A 65-amino-acid polypeptide reads, in one-letter code: GRDAYIAQPENCVYECAKNSYCNDLCTKNGAKSGYCQWLGKYGNACWCEDLPDNVPIRIPGKCHF.

Residues 2 to 64 (RDAYIAQPEN…VPIRIPGKCH (63 aa)) form the LCN-type CS-alpha/beta domain. 4 cysteine pairs are disulfide-bonded: Cys-12-Cys-63, Cys-16-Cys-36, Cys-22-Cys-46, and Cys-26-Cys-48.

Belongs to the long (4 C-C) scorpion toxin superfamily. Sodium channel inhibitor family. Alpha subfamily. As to expression, expressed by the venom gland.

Its subcellular location is the secreted. Its function is as follows. Alpha toxins bind voltage-independently at site-3 of sodium channels (Nav) and inhibit the inactivation of the activated channels, thereby blocking neuronal transmission. This alpha-like toxin is highly toxic to mice and insects. The polypeptide is Alpha-like toxin Bom4 (Buthus occitanus mardochei (Moroccan scorpion)).